A 486-amino-acid polypeptide reads, in one-letter code: Vacuolar protein sorting-associated protein 73 (486 aa).

Over 1–26 the chain is Cytoplasmic; that stretch reads MNRILSSASLLSNVSMPRQNKHKITK. Residues 27–47 form a helical membrane-spanning segment; sequence ALCYAIIVASIGSIQFGYHLS. Over 48 to 90 the chain is Mitochondrial intermembrane; sequence ELNAPQQVLSCSEFDIPMEGYPYDRTWLGKRGYKQCIPLNDEQ. The helical transmembrane segment at 91–111 threads the bilayer; it reads IGIVTSVFCIGGILGSYFATS. Over 112–119 the chain is Cytoplasmic; it reads LANIYGRK. A helical transmembrane segment spans residues 120–140; it reads FSSLINCTLNIVGSLIIFNSN. Residues 141 to 146 lie on the Mitochondrial intermembrane side of the membrane; the sequence is SYRGLI. A helical transmembrane segment spans residues 147–167; that stretch reads IGRILVGISCGSLIVIIPLFI. Topologically, residues 168–178 are cytoplasmic; the sequence is KEVAPSGWEGL. Residues 179–199 form a helical membrane-spanning segment; that stretch reads LGSMTQICIRLGVLLTQGIAL. The Mitochondrial intermembrane portion of the chain corresponds to 200-208; sequence PLTDSYRWR. The chain crosses the membrane as a helical span at residues 209-229; sequence WILFGSFLIAVLNFFMWFIVD. The Cytoplasmic portion of the chain corresponds to 230-305; sequence ESPKWLLAHG…RDRTNVKSRH (76 aa). The chain crosses the membrane as a helical span at residues 306–326; it reads VITVLLFGQQFCGINSIVLYG. The Mitochondrial intermembrane segment spans residues 327-342; that stretch reads TKIISQLYPQHAIRIN. Residues 343 to 363 traverse the membrane as a helical segment; it reads FFISMVNVLVTILVSLLIHSL. Residues 364-366 are Cytoplasmic-facing; the sequence is PRK. Residues 367–387 form a helical membrane-spanning segment; that stretch reads PLLMTSTVLVSVTAFIMGIAM. The Mitochondrial intermembrane portion of the chain corresponds to 388–396; sequence NHNKMNLLI. A helical membrane pass occupies residues 397–417; sequence VFSFIYMGVFTMGLNPLPFII. At 418 to 432 the chain is on the cytoplasmic side; that stretch reads MREVSKPQDMVLAQR. The helical transmembrane segment at 433-453 threads the bilayer; it reads YGTICNWVGTFIIAYTFPIIH. Residue D454 is a topological domain, mitochondrial intermembrane. The helical transmembrane segment at 455–475 threads the bilayer; it reads VLSGYVFIIFAIIACSISAFI. At 476–486 the chain is on the cytoplasmic side; it reads WKKVPETKRSG.

This sequence belongs to the major facilitator superfamily. Sugar transporter (TC 2.A.1.1) family.

The protein resides in the mitochondrion membrane. In terms of biological role, may be involved in vacuolar protein sorting. This chain is Vacuolar protein sorting-associated protein 73 (VPS73), found in Saccharomyces cerevisiae (strain ATCC 204508 / S288c) (Baker's yeast).